We begin with the raw amino-acid sequence, 670 residues long: Solute carrier organic anion transporter family member 1A5 (670 aa).

The Cytoplasmic portion of the chain corresponds to 1–20 (MGETEKRIATHGVRCFSKIK). A helical transmembrane segment spans residues 21-40 (MFLLALTCAYVSKSLSGIYM). Residues 41 to 59 (NSMLTQIERQFDIPTSIVG) lie on the Extracellular side of the membrane. A helical transmembrane segment spans residues 60-80 (LINGSFEIGNLLLIILVSYFG). Topologically, residues 81–86 (TKLHRP) are cytoplasmic. Residues 87–111 (IMIGIGCVIMGLGCFLMSLPHFLMG) form a helical membrane-spanning segment. Over 112 to 155 (RYEYETTISPTSNLSSNSFLCMENRTQTLKPTQDPAECVKEMKS) the chain is Extracellular. N-linked (GlcNAc...) asparagine glycans are attached at residues Asn124 and Asn135. Residues 156-184 (LMWIYVLVGNIIRGIGETPIMPLGISYIE) form a helical membrane-spanning segment. At 185-203 (DFAKSENSPLYIGILESGK) the chain is on the cytoplasmic side. Residues 204–224 (MIGPIVGLLLGSFCARIYVDT) form a helical membrane-spanning segment. Over 225-242 (GSVNTDDLTITPTDTRWV) the chain is Extracellular. Residues 243-267 (GAWWIGFLVCAGVNILTSIPFFFFP) traverse the membrane as a helical segment. The Cytoplasmic segment spans residues 268–311 (KTLPKEGLQDNVARTENDKEEKHREKAKEENRGITKDFLPFMKS). Residues 312 to 333 (LSCNPIYMLLILTSVLQINAFI) traverse the membrane as a helical segment. Residues 334–353 (NMFTFLPKYLEQQYGKSTSE) lie on the Extracellular side of the membrane. A helical transmembrane segment spans residues 354–377 (VVLLIGVCNLPPICIGYLLIGFIM). Residues 378–381 (KKFR) are Cytoplasmic-facing. A helical transmembrane segment spans residues 382 to 405 (ITVKKAAYMAFCLSLFEYLLSYFH). Residues 406–513 (FMISCDNFQV…PECANKLQYF (108 aa)) lie on the Extracellular side of the membrane. In terms of domain architecture, Kazal-like spans 433–488 (NKVLADCNTRCSCLTNTWDPVCGDNGLSYMSACLAGCEKSVGMGTHMVFQNCSCIQ). 3 cysteine pairs are disulfide-bonded: Cys439–Cys469, Cys445–Cys465, and Cys454–Cys486. N-linked (GlcNAc...) asparagine glycans are attached at residues Asn483 and Asn492. Residues 514–536 (LIMSVIGSFIYSITAIPGYMVLL) form a helical membrane-spanning segment. Residues 537–545 (RCIKSEEKS) lie on the Cytoplasmic side of the membrane. The chain crosses the membrane as a helical span at residues 546–571 (LGIGLHAFCTRIFAGIPAPIYFGALI). Residues 572–605 (DRTCLHWGTLKCGEPGACRIYNINNFRRIYLVLP) are Extracellular-facing. Residues 606–623 (AALRGSSYLPAFFILILM) traverse the membrane as a helical segment. At 624 to 670 (RKFQLPGEMYSSETELADMKQTVKKSECTDVHGIPKVENDGELKTKL) the chain is on the cytoplasmic side.

This sequence belongs to the organo anion transporter (TC 2.A.60) family. As to expression, expressed in brain, choroid plexus and lung, but not in liver or kidney.

It localises to the cell membrane. It is found in the basal cell membrane. The catalysed reaction is taurocholate(out) = taurocholate(in). It carries out the reaction glycocholate(out) = glycocholate(in). The enzyme catalyses taurochenodeoxycholate(out) = taurochenodeoxycholate(in). It catalyses the reaction tauroursodeoxycholate(out) = tauroursodeoxycholate(in). The catalysed reaction is 3,3',5'-triiodo-L-thyronine(out) = 3,3',5'-triiodo-L-thyronine(in). It carries out the reaction L-thyroxine(out) = L-thyroxine(in). The enzyme catalyses taurodeoxycholate(out) = taurodeoxycholate(in). It catalyses the reaction glycodeoxycholate(out) = glycodeoxycholate(in). The catalysed reaction is glycochenodeoxycholate(out) = glycochenodeoxycholate(in). It carries out the reaction glycoursodeoxycholate(out) = glycoursodeoxycholate(in). The enzyme catalyses estrone 3-sulfate(out) = estrone 3-sulfate(in). It catalyses the reaction prostaglandin E2(out) = prostaglandin E2(in). The catalysed reaction is substance P(out) = substance P(in). Its function is as follows. Na(+)-independent transporter that mediates the cellular uptake of a broad range of organic anions such as the endogenous bile salts cholate and deoxycholate, either in their unconjugated or conjugated forms (taurocholate and glycocholate), estrone 3-sulfate and prostaglandin E2, at the plasma membrane. Responsible for intestinal absorption of bile acids. Capable of thyroid hormone transport (both T3 or 3,3',5'-triiodo-L-thyronine, and T4 or L-tyroxine). Plays roles in blood-brain and -cerebrospinal fluid barrier transport of organic anions and signal mediators, and in hormone uptake by neural cells. May also play a role in the reuptake of neuropeptides such as substance P/TAC1 and vasoactive intestinal peptide/VIP released from retinal neurons. Shows a pH-sensitive substrate specificity which may be ascribed to the protonation state of the binding site and leads to a stimulation of substrate transport in an acidic microenvironment. Hydrogencarbonate/HCO3(-) acts as the probable counteranion that exchanges for organic anions. May contribute to regulate the transport of organic compounds in testis across the blood-testis-barrier. This Mus musculus (Mouse) protein is Solute carrier organic anion transporter family member 1A5 (Slco1a5).